Here is a 257-residue protein sequence, read N- to C-terminus: tRNA (guanine-N(1)-)-methyltransferase (257 aa).

Residues glycine 117 and 137–142 (LGDFVL) contribute to the S-adenosyl-L-methionine site.

The protein belongs to the RNA methyltransferase TrmD family. In terms of assembly, homodimer.

The protein resides in the cytoplasm. It catalyses the reaction guanosine(37) in tRNA + S-adenosyl-L-methionine = N(1)-methylguanosine(37) in tRNA + S-adenosyl-L-homocysteine + H(+). Specifically methylates guanosine-37 in various tRNAs. The chain is tRNA (guanine-N(1)-)-methyltransferase from Bordetella parapertussis (strain 12822 / ATCC BAA-587 / NCTC 13253).